A 648-amino-acid chain; its full sequence is Nucleoside triphosphatase I (648 aa).

Residues 48 to 212 enclose the Helicase ATP-binding domain; the sequence is FIGLKNLNSM…NNLIGLLRPN (165 aa). 61–68 is an ATP binding site; it reads WDTGMGKT. Residues 150–153 carry the DEXH box motif; it reads DEVH. One can recognise a Helicase C-terminal domain in the interval 378-541; the sequence is YIETCKIILN…KINVIFDLLK (164 aa). The binding to the cap-specific mRNA (nucleoside-2'-O-)-methyltransferase stretch occupies residues 467 to 533; that stretch reads DIIILDMPWN…DIIKDKQGKI (67 aa).

Belongs to the helicase family. NPH I subfamily. In terms of assembly, monomer. Interacts (via C-terminus) with RAP94 (via N-terminus). Interacts with the cap-specific mRNA (nucleoside-2'-O-)-methyltransferase.

The protein localises to the virion. It carries out the reaction a ribonucleoside 5'-triphosphate + H2O = a ribonucleoside 5'-diphosphate + phosphate + H(+). Functionally, DNA-dependent ATPase required for providing the needed energy to achieve the termination of early transcripts. Acts in concert with the RAP94 subunit of the virion RNA polymerase and the capping enzyme/VTF to catalyze release of UUUUUNU-containing nascent RNA from the elongation complex. NPH-I must bind ssDNA in order to exhibit ATPase activity. The sequence is that of Nucleoside triphosphatase I (NPH1) from Amsacta (AmEPV).